Here is a 540-residue protein sequence, read N- to C-terminus: MDGYEATRIVLSRIQSLDPENASKIMGLLLLQDHGEKEMIRLAFGPETLVHSVIVKAKKELGLMNCSRSPWSHQDELISPKNNRGSSLNPASLPFYANGGRSSRDLTNDFELMDDMNSRSTDFLGSVHARSGSCVLDGLGYGGDSDLGFGGVPCSYFARGFCKNGASCRFVHSDGGADLVGSPSRIELLRSNSVPPRLAHHFMTRSSLPSFSTKGVNLQQNDVQRAAAALMIGDELQKLGRWRPERIDLSAMACPASRQIYLTFPADSRFREEDVSNYFSTFGPVQDVRIPYQQKRMFGFVTFVYPETVKSILAKGNPHFVCDSRVLVKPYKEKGKVPDKYRTNQTTERELSPTGLDSSPRDVLGGRGFYNNTQDVLWRSKFEEEILELQSRRLMNLQLLDVKKHFQLNSPTNIHSPNPFSQSLISPRPLSVIKREYDGGEKGKGSSKEGSDDDTMNLPERLEDSLPDSPFASPAHHLLLFADSADNNGSDLWSPSSDNDDNSTPSTLSDSFNSFNYQMPRLPAIGMLPGRGGPTCRVGI.

The segment at 148 to 175 (GFGGVPCSYFARGFCKNGASCRFVHSDG) adopts a C3H1-type zinc-finger fold. Residues 258 to 334 (RQIYLTFPAD…RVLVKPYKEK (77 aa)) enclose the RRM domain. Composition is skewed to basic and acidic residues over residues 337–351 (VPDK…EREL) and 436–450 (EYDG…SKEG). Disordered stretches follow at residues 337–365 (VPDK…DVLG), 436–469 (EYDG…LPDS), and 490–514 (SDLW…SFNS). The residue at position 451 (Ser451) is a Phosphoserine. The span at 490-511 (SDLWSPSSDNDDNSTPSTLSDS) shows a compositional bias: low complexity.

Functionally, possesses RNA-binding and ribonuclease activities in vitro. The polypeptide is Zinc finger CCCH domain-containing protein 46 (Arabidopsis thaliana (Mouse-ear cress)).